Consider the following 139-residue polypeptide: MKNARLFLIAIGVFYIINLIGTLPFSTLGLFGRMYPGVELHVGAPIFTLLQDAWAVVGLQLGAIGAVALWGARDPGRYRAVIPVVIATEVVDGLWDFYSIVWSHEALWFGLVTLVIHVLWIGWGLHAWRALASKSLRTL.

This is an uncharacterized protein from Burkholderia cepacia (Pseudomonas cepacia).